Here is a 402-residue protein sequence, read N- to C-terminus: Galactoside 2-alpha-L-fucosyltransferase (402 aa).

Over 1–6 (MRYNSN) the chain is Cytoplasmic. The chain crosses the membrane as a helical; Signal-anchor for type II membrane protein span at residues 7 to 27 (YLMYFCLVLGIFANIYVIIKI). Residues 28 to 402 (TLGSSHILEY…TDLNGKISKY (375 aa)) are Lumenal-facing. N119, N175, and N301 each carry an N-linked (GlcNAc...) asparagine glycan.

This sequence belongs to the glycosyltransferase 11 family. May form oligomers. Post-translationally, N-glycosylated. Expression is restricted to pharyngeal neurons and gland cells.

It is found in the golgi apparatus. Its subcellular location is the golgi stack membrane. It functions in the pathway protein modification; protein glycosylation. Its function is as follows. Selectively catalyzes the addition of fucose in alpha 1-2 linkage to Gal-beta-(1-&gt;3)-GalNAc-alpha-R, Gal-beta-(1-&gt;3)-(GlcNAc-beta-(1-&gt;6))-GalNAc-alpha-R and Gal-beta-(1-&gt;3)-GalNAc acceptors but not Gal-beta-(1-&gt;3)-GlcNAc-beta-(1-&gt;3)-Gal-beta-(1-&gt;4)-Glc in vitro. The chain is Galactoside 2-alpha-L-fucosyltransferase from Caenorhabditis elegans.